The following is a 495-amino-acid chain: Heterogeneous nuclear ribonucleoprotein Q (495 aa).

Residues 1 to 10 (MSDARDNDDR) show a composition bias toward basic and acidic residues. The segment at 1-101 (MSDARDNDDR…KPPSPIDDED (101 aa)) is disordered. Composition is skewed to acidic residues over residues 11–46 (VDFEEGSYSEMEDEVEEEQVEEYEEEEEEDDDDDDV) and 67–101 (MEDVQEEIAEDDDNHIDIETADDDEKPPSPIDDED). 3 consecutive RRM domains span residues 116 to 194 (SEVF…LSET), 196 to 278 (NRLF…WADP), and 292 to 368 (KALY…LAKP). Residues 452–495 (MPMAAAPPQRPRRNDRNNGSSGGSGRDNSHEHDGNRGGRRYRPY) form a disordered region. Residues 478–487 (DNSHEHDGNR) are compositionally biased toward basic and acidic residues.

Interacts with LHP1 in the nucleus on a common set of chromatin regions. Predominantly expressed in vascular and meristematic tissues. Expressed throughout development in seedlings, roots, leaves, floral buds and siliques.

It is found in the nucleus. It localises to the cytoplasm. The protein localises to the microsome. In terms of biological role, transcriptional activator that binds DNA on GAGA-like motif and 5'-(C/G)ACGTG(G/T)C(A/G)-3' consensus motif in the promoters of target genes. Component of ribonucleosomes, which are complexes of at least 20 other different heterogeneous nuclear ribonucleoproteins (hnRNP). hnRNP play an important role in processing of precursor mRNA in the nucleus. Required during flower development and for cell fate determination. Acts both as an antagonist and as a promoter of polycomb LHP1 gene regulation activity, depending of target genes, to regulate the transcription of stress-responsive and flowering genes. May regulate histone H3 trimethylation on lysine 27 (H3K27me3). Recognizes and binds histone H3 tails methylated at 'Lys-4' (H3K4me) and acetylated at 'Lys-9' (H3K9ac), leading to epigenetic activation. When in complex with LHP1, recognizes and binds histone H3 tails methylated at 'Lys-4' (H3K4me) and 'Lys-27' (H3K27me), mostly corresponding to stress-responsive genes. May function as a suppressor of cell-autonomous immune responses involving glucosinolates, salicylic acid (SA) and jasmonic acid (JA) pathways toward pathogenic bacteria and fungi. The protein is Heterogeneous nuclear ribonucleoprotein Q of Arabidopsis thaliana (Mouse-ear cress).